The sequence spans 172 residues: Early E3 18.5 kDa glycoprotein (172 aa).

A signal peptide spans 1 to 19; that stretch reads MGAILVVLALLSLLGLGSA. The Lumenal segment spans residues 20–136; the sequence is NLNPLDHDPC…SKENIVAFSI (117 aa). N-linked (GlcNAc...) asparagine; by host glycosylation is present at Asn36. Cystine bridges form between Cys37–Cys55 and Cys49–Cys111. Asn68, Asn72, and Asn102 each carry an N-linked (GlcNAc...) asparagine; by host glycan. The helical transmembrane segment at 137-157 threads the bilayer; that stretch reads AYCLVTCIITAIICVCIHLLI. The Cytoplasmic portion of the chain corresponds to 158-172; it reads VIRPRQSNEEKEKMP. The Di-lysine motif signature appears at 168-172; it reads KEKMP.

Belongs to the adenoviridae E19 family. In terms of processing, both disulfide bonds are absolutely critical for the interaction with MHC antigens. Post-translationally, N-glycosylated; high-mannose.

The protein resides in the host endoplasmic reticulum membrane. Binds and retains class I heavy chains in the endoplasmic reticulum during the early period of virus infection, thereby impairing their transport to the cell surface. Also delays the expression of class I alleles that it cannot affect by direct retention. Binds transporters associated with antigen processing (TAP) and acts as a tapasin inhibitor, preventing class I/TAP association. In consequence, infected cells are masked for immune recognition by cytotoxic T-lymphocytes. The chain is Early E3 18.5 kDa glycoprotein from Human adenovirus B serotype 3 (HAdV-3).